Reading from the N-terminus, the 132-residue chain is UPF0299 membrane protein YohJ (132 aa).

4 helical membrane-spanning segments follow: residues 5–25, 26–46, 63–83, and 93–113; these read LNII…LYAG, IFIA…MLIL, GCYV…VGVM, and FGPV…VVSW.

The protein belongs to the UPF0299 family.

The protein localises to the cell inner membrane. The protein is UPF0299 membrane protein YohJ of Shigella flexneri serotype 5b (strain 8401).